We begin with the raw amino-acid sequence, 311 residues long: tRNA dimethylallyltransferase (311 aa).

ATP is bound at residue 11 to 18; that stretch reads GPTAVGKT. Position 13–18 (13–18) interacts with substrate; that stretch reads TAVGKT. Positions 36-39 are interaction with substrate tRNA; it reads DSVQ.

This sequence belongs to the IPP transferase family. In terms of assembly, monomer. Mg(2+) serves as cofactor.

It catalyses the reaction adenosine(37) in tRNA + dimethylallyl diphosphate = N(6)-dimethylallyladenosine(37) in tRNA + diphosphate. Its function is as follows. Catalyzes the transfer of a dimethylallyl group onto the adenine at position 37 in tRNAs that read codons beginning with uridine, leading to the formation of N6-(dimethylallyl)adenosine (i(6)A). This Exiguobacterium sp. (strain ATCC BAA-1283 / AT1b) protein is tRNA dimethylallyltransferase.